The sequence spans 183 residues: Inner membrane-spanning protein YciB (183 aa).

Helical transmembrane passes span 19–39 (LYGV…QLIV), 53–73 (IMGI…DLNF), 76–96 (WKVT…QFVF), 121–141 (LGWA…SYYF), and 151–171 (TFGF…YLYP).

This sequence belongs to the YciB family.

The protein localises to the cell inner membrane. Its function is as follows. Plays a role in cell envelope biogenesis, maintenance of cell envelope integrity and membrane homeostasis. The sequence is that of Inner membrane-spanning protein YciB from Actinobacillus pleuropneumoniae serotype 3 (strain JL03).